Here is a 396-residue protein sequence, read N- to C-terminus: MTRLNPYFGEFGGMYVPQILMPALLQLEDAFISAQSDPAFQAEFTDLLKNYAGRPTALTRCLNLTKGSKTRLYLKREDLLHGGAHKTNQVLGQALLAKRMGKKEIIAETGAGQHGVASALACALLGLKCRIYMGAKDIERQSPNLFRMRLMGAEVIPVHSGSATLKDACNEALRDWSGSYETAHYMLGTAAGPHPFPTIVREFQRMIGEETKAQILQQEGRLPDAVIACVGGGSNAIGMFADFIDEPGVELIGVEPGGHGIESGEHGAPLKHGRVGIYFGMKSPMMQTADGQIEESYSISAGLDFPSVGPQHAHLNSIGRANYVSITDEEALDAFKALCRSEGIIPALESSHALAHALKMMREAPEKEQLLVVNLSGRGDKDIFTVHDILTAKGEI.

N6-(pyridoxal phosphate)lysine is present on Lys86.

This sequence belongs to the TrpB family. In terms of assembly, tetramer of two alpha and two beta chains. Pyridoxal 5'-phosphate serves as cofactor.

The enzyme catalyses (1S,2R)-1-C-(indol-3-yl)glycerol 3-phosphate + L-serine = D-glyceraldehyde 3-phosphate + L-tryptophan + H2O. It functions in the pathway amino-acid biosynthesis; L-tryptophan biosynthesis; L-tryptophan from chorismate: step 5/5. Its function is as follows. The beta subunit is responsible for the synthesis of L-tryptophan from indole and L-serine. The sequence is that of Tryptophan synthase beta chain from Erwinia tasmaniensis (strain DSM 17950 / CFBP 7177 / CIP 109463 / NCPPB 4357 / Et1/99).